A 432-amino-acid chain; its full sequence is Pachytene checkpoint protein 2 homolog (432 aa).

Residue 179–186 (GPPGTGKT) coordinates ATP.

It belongs to the AAA ATPase family. PCH2 subfamily.

Its function is as follows. Plays a key role in chromosome recombination and chromosome structure development during meiosis. Required at early steps in meiotic recombination that leads to non-crossovers pathways. Also needed for efficient completion of homologous synapsis by influencing crossover distribution along the chromosomes affecting both crossovers and non-crossovers pathways. In Xenopus tropicalis (Western clawed frog), this protein is Pachytene checkpoint protein 2 homolog (trip13).